We begin with the raw amino-acid sequence, 179 residues long: Cytochrome b6-f complex iron-sulfur subunit (179 aa).

The chain crosses the membrane as a helical span at residues 21–43 (LLTFGSATGVALGMLYPVVRYFI). The Rieske domain maps to 61 to 162 (GNDISVSDFL…AAVSDDKITF (102 aa)). [2Fe-2S] cluster contacts are provided by Cys-108, His-110, Cys-126, and His-129. A disulfide bond links Cys-113 and Cys-128.

It belongs to the Rieske iron-sulfur protein family. In terms of assembly, the 4 large subunits of the cytochrome b6-f complex are cytochrome b6, subunit IV (17 kDa polypeptide, PetD), cytochrome f and the Rieske protein, while the 4 small subunits are PetG, PetL, PetM and PetN. The complex functions as a dimer. The cofactor is [2Fe-2S] cluster.

It localises to the cellular thylakoid membrane. The catalysed reaction is 2 oxidized [plastocyanin] + a plastoquinol + 2 H(+)(in) = 2 reduced [plastocyanin] + a plastoquinone + 4 H(+)(out). Its function is as follows. Component of the cytochrome b6-f complex, which mediates electron transfer between photosystem II (PSII) and photosystem I (PSI), cyclic electron flow around PSI, and state transitions. The polypeptide is Cytochrome b6-f complex iron-sulfur subunit (Cyanothece sp. (strain PCC 7425 / ATCC 29141)).